The chain runs to 277 residues: MALKKFNPTTPGQRQLVMVDRSALYKGKPVKSLTEGKHSAGGRNNTGRIVVRFRGGGHKQTYRIVDFKRTKVDMPAVVERLEYDPNRTAFIALIKYTDGTQAYILAPQRLAVGDTVLAGAYVDVKPGNVMPLGNMPIGTIVHNVELKIGKGGQIARSAGTYAQLVGRDHDYVIVRLNSGEQRLVHGRCTATIGAVSNPDHMNISIGKAGRSRWLGRKPHNRGVTMNPVDHPHGGGEGRTSGGRHPVTPWGKPTKGKKTRSNKSTNKFILISRHKRKK.

Residues 222-277 (GVTMNPVDHPHGGGEGRTSGGRHPVTPWGKPTKGKKTRSNKSTNKFILISRHKRKK) form a disordered region.

The protein belongs to the universal ribosomal protein uL2 family. In terms of assembly, part of the 50S ribosomal subunit. Forms a bridge to the 30S subunit in the 70S ribosome.

One of the primary rRNA binding proteins. Required for association of the 30S and 50S subunits to form the 70S ribosome, for tRNA binding and peptide bond formation. It has been suggested to have peptidyltransferase activity; this is somewhat controversial. Makes several contacts with the 16S rRNA in the 70S ribosome. The sequence is that of Large ribosomal subunit protein uL2 from Rhodopseudomonas palustris (strain BisB18).